The primary structure comprises 105 residues: Platelet factor 4 (105 aa).

Positions 1-29 are cleaved as a signal peptide; sequence MSAAAVFRGLRPSPELLLLGLLLLPAVVA. A glycan (O-linked (GalNAc...) threonine; partial) is linked at Thr-31. Intrachain disulfides connect Cys-44-Cys-71 and Cys-46-Cys-87. Ser-61 carries the post-translational modification Phosphoserine. 96–102 is a binding site for heparin; the sequence is KKIIKKL.

Belongs to the intercrine alpha (chemokine CxC) family. In terms of assembly, homotetramer. Interacts with TNFAIP6 (via Link domain). Interacts with CCR1. Interacts with CXCR3. Interacts with THBD; this interaction enhances generation of activated protein C. In terms of processing, O-linked glycan consists of Gal-GalNAc disaccharide which is modified with sialic acid residues (microheterogeneity).

The protein resides in the secreted. In terms of biological role, chemokine released during platelet aggregation that plays a role in different biological processes including hematopoiesis, cell proliferation, differentiation, and activation. Acts via different functional receptors including CCR1, CXCR3A or CXCR3B. Upon interaction with CXCR3A receptor, induces activated T-lymphocytes migration mediated via downstream Ras/extracellular signal-regulated kinase (ERK) signaling. Neutralizes the anticoagulant effect of heparin by binding more strongly to heparin than to the chondroitin-4-sulfate chains of the carrier molecule. Plays a role in the inhibition of hematopoiesis and in the maintenance of hematopoietic stem cell (HSC) quiescence. Chemotactic for neutrophils and monocytes via CCR1. Inhibits endothelial cell proliferation. In cooperation with toll-like receptor 8/TLR8, induces chromatin remodeling and activates inflammatory gene expression via the TBK1-IRF5 axis. In addition, induces myofibroblast differentiation and collagen synthesis in different precursor cells, including endothelial cells, by stimulating endothelial-to-mesenchymal transition. Interacts with thrombomodulin/THBD to enhance the activation of protein C and thus potentiates its anticoagulant activity. This Rattus norvegicus (Rat) protein is Platelet factor 4 (Pf4).